A 277-amino-acid chain; its full sequence is Large ribosomal subunit protein uL2 (277 aa).

2 disordered regions span residues 1–20 (MAVKKYRPYTPSRRQMTTAD) and 210–277 (GRSR…RGGK). Over residues 210 to 221 (GRSRWLGRKPHQ) the composition is skewed to basic residues.

Belongs to the universal ribosomal protein uL2 family. Part of the 50S ribosomal subunit. Forms a bridge to the 30S subunit in the 70S ribosome.

Functionally, one of the primary rRNA binding proteins. Required for association of the 30S and 50S subunits to form the 70S ribosome, for tRNA binding and peptide bond formation. It has been suggested to have peptidyltransferase activity; this is somewhat controversial. Makes several contacts with the 16S rRNA in the 70S ribosome. The protein is Large ribosomal subunit protein uL2 of Deinococcus deserti (strain DSM 17065 / CIP 109153 / LMG 22923 / VCD115).